A 139-amino-acid polypeptide reads, in one-letter code: Putative pre-16S rRNA nuclease (139 aa).

It belongs to the YqgF nuclease family.

It is found in the cytoplasm. Could be a nuclease involved in processing of the 5'-end of pre-16S rRNA. The polypeptide is Putative pre-16S rRNA nuclease (Streptococcus equi subsp. zooepidemicus (strain H70)).